A 160-amino-acid polypeptide reads, in one-letter code: Cytochrome b6-f complex subunit 4 (160 aa).

The next 3 membrane-spanning stretches (helical) occupy residues 36 to 56, 95 to 115, and 131 to 151; these read LLYV…ALAV, LLGV…PFIE, and TVFL…ALPL.

This sequence belongs to the cytochrome b family. PetD subfamily. As to quaternary structure, the 4 large subunits of the cytochrome b6-f complex are cytochrome b6, subunit IV (17 kDa polypeptide, PetD), cytochrome f and the Rieske protein, while the 4 small subunits are PetG, PetL, PetM and PetN. The complex functions as a dimer.

Its subcellular location is the cellular thylakoid membrane. Its function is as follows. Component of the cytochrome b6-f complex, which mediates electron transfer between photosystem II (PSII) and photosystem I (PSI), cyclic electron flow around PSI, and state transitions. The protein is Cytochrome b6-f complex subunit 4 of Desmonostoc sp. (strain PCC 7906) (Nostoc sp. (strain PCC 7906)).